Reading from the N-terminus, the 507-residue chain is 2,3-bisphosphoglycerate-independent phosphoglycerate mutase (507 aa).

2 residues coordinate Mn(2+): D13 and S63. The Phosphoserine intermediate role is filled by S63. Residues H124, 153–154 (RD), R183, R189, 254–257 (RADR), and K330 contribute to the substrate site. Positions 396, 400, 437, 438, and 456 each coordinate Mn(2+).

This sequence belongs to the BPG-independent phosphoglycerate mutase family. In terms of assembly, monomer. Requires Mn(2+) as cofactor.

The catalysed reaction is (2R)-2-phosphoglycerate = (2R)-3-phosphoglycerate. It functions in the pathway carbohydrate degradation; glycolysis; pyruvate from D-glyceraldehyde 3-phosphate: step 3/5. Its function is as follows. Catalyzes the interconversion of 2-phosphoglycerate and 3-phosphoglycerate. The chain is 2,3-bisphosphoglycerate-independent phosphoglycerate mutase from Paracoccus denitrificans (strain Pd 1222).